We begin with the raw amino-acid sequence, 1036 residues long: Protein CLEC16A (1036 aa).

The region spanning 51–198 (IRSITEILIW…AVRTITLNVY (148 aa)) is the FPL domain. Disordered regions lie at residues 375-416 (SLEM…DAEK), 437-458 (GTSV…NSEN), 876-967 (HSSP…PSLL), and 1008-1036 (SQLP…PTEH). The segment covering 381–392 (HKGKKRMQKRPN) has biased composition (basic residues). Composition is skewed to low complexity over residues 877–891 (SSPS…FASG), 898–923 (STSH…APTT), and 943–954 (NSKPSKNSSARS).

It belongs to the CLEC16A/gop-1 family. In terms of assembly, interacts with RNF41/NRDP1. In terms of tissue distribution, ubiquitously expressed. Expressed in pancreatic islets.

It is found in the endosome membrane. The protein localises to the lysosome membrane. In terms of biological role, regulator of mitophagy through the upstream regulation of the RNF41/NRDP1-PRKN pathway. Mitophagy is a selective form of autophagy necessary for mitochondrial quality control. The RNF41/NRDP1-PRKN pathway regulates autophagosome-lysosome fusion during late mitophagy. May protect RNF41/NRDP1 from proteasomal degradation, RNF41/NRDP1 which regulates proteasomal degradation of PRKN. Plays a key role in beta cells functions by regulating mitophagy/autophagy and mitochondrial health. This chain is Protein CLEC16A, found in Mus musculus (Mouse).